Reading from the N-terminus, the 351-residue chain is MQRNRVLAFLLLAAQLLVKIPETCAKFPALIVFGDSTVDSGNNNQISTVLKSNFQPYGRDYFDGKATGRFSNGRIAPDFISEGLGLKNAVPAYLDPAYNIADFATGVCFASAGTGLDNATSAVLSVMPLWKEVEYYKEYQTRLRSYLGEEKANEIISESLYLISIGTNDFLENYYLLPRKLRKYSVNEYQYFLIGIAADFVTDIYRLGARKMSLSGLSPFGCLPLERTTQLFYGSKCIEEYNIVARDFNIKMEEKVFQLNRDLNGIQLVFSNPYDLVSEIIYHPEAFGFENVRSACCGTGYYEMSYLCDKMNPFTCSDASKYVFWDSFHPTEKTNAIVANHVLKYDLSRFQ.

The first 25 residues, 1–25, serve as a signal peptide directing secretion; that stretch reads MQRNRVLAFLLLAAQLLVKIPETCA. The active-site Nucleophile is the Ser-36. The N-linked (GlcNAc...) asparagine glycan is linked to Asn-118. Catalysis depends on residues Asp-326 and His-329.

The protein belongs to the 'GDSL' lipolytic enzyme family.

It is found in the secreted. This Arabidopsis thaliana (Mouse-ear cress) protein is GDSL esterase/lipase At4g26790.